Here is a 580-residue protein sequence, read N- to C-terminus: Arginine--tRNA ligase (580 aa).

A 'HIGH' region motif is present at residues 123–133; sequence PNIAKEMHVGH.

This sequence belongs to the class-I aminoacyl-tRNA synthetase family. As to quaternary structure, monomer.

It localises to the cytoplasm. The enzyme catalyses tRNA(Arg) + L-arginine + ATP = L-arginyl-tRNA(Arg) + AMP + diphosphate. The protein is Arginine--tRNA ligase (argS) of Buchnera aphidicola subsp. Schizaphis graminum (strain Sg).